The sequence spans 811 residues: Transmembrane protease serine 6 (811 aa).

Topologically, residues 1–55 (MLLLFHSKRMPVAEAPQVAGGQGDGGDGEEAEPEGMFKACEDSKRKARGYLRLVP) are cytoplasmic. The helical; Signal-anchor for type II membrane protein transmembrane segment at 56-76 (LFVLLALLVLASAGVLLWYFL) threads the bilayer. Over 77–811 (GYKAEVMVSQ…VISWIQQVVT (735 aa)) the chain is Extracellular. An SEA domain is found at 84-209 (VSQVYSGSLR…EGLVILEASV (126 aa)). N136, N184, N216, N338, N433, and N453 each carry an N-linked (GlcNAc...) asparagine glycan. CUB domains follow at residues 213 to 336 (AALN…QACE) and 335 to 452 (CEVN…YGLY). A disulfide bond links C335 and C366. LDL-receptor class A domains are found at residues 457–489 (PCPG…ERNC), 490–526 (VCRA…EQCQ), and 530–567 (PCGT…EHCD). 10 disulfide bridges follow: C458–C470, C464–C480, C474–C489, C491–C503, C497–C516, C510–C525, C531–C543, C538–C557, C551–C566, and C602–C618. N518 carries N-linked (GlcNAc...) asparagine glycosylation. The Peptidase S1 domain maps to 577–811 (IVGGAVSSEG…VISWIQQVVT (235 aa)). Active-site charge relay system residues include H617 and D668. Intrachain disulfides connect C702/C768, C733/C747, and C758/C787. The active-site Charge relay system is S762.

The protein belongs to the peptidase S1 family. As to quaternary structure, interacts with HJV. In terms of processing, the single-chain zymogen undergoes autoproteolytic processing. This results in TMPRSS6 shedding from the cell surface and conversion into an activated two-chains form which is released extracellularly. The process involves a trans-activation mechanism that requires TMPRSS6 oligomerization.

The protein resides in the cell membrane. Functionally, membrane-bound serine protease. Through the cleavage of cell surface hemojuvelin (HJV), a regulator of the expression of the iron absorption-regulating hormone hepicidin/HAMP, plays a role in iron homeostasis. The polypeptide is Transmembrane protease serine 6 (TMPRSS6) (Homo sapiens (Human)).